A 415-amino-acid chain; its full sequence is Mitochondrial tRNA-specific 2-thiouridylase 1 (415 aa).

ATP is bound by residues Ala-37 to Ser-44 and Met-63. An interaction with target base in tRNA region spans residues Asn-124–Asp-126. The active-site Nucleophile is the Cys-129. A disulfide bridge links Cys-129 with Cys-234. Residue Gly-159 participates in ATP binding. Residues Lys-183–Gln-185 form an interaction with tRNA region. The active-site Cysteine persulfide intermediate is Cys-234. The segment at Arg-356–His-357 is interaction with tRNA.

Belongs to the MnmA/TRMU family.

It is found in the mitochondrion. The catalysed reaction is 5-taurinomethyluridine(34) in tRNA + S-sulfanyl-L-cysteinyl-[protein] + AH2 + ATP = 5-taurinomethyl-2-thiouridine(34) in tRNA + L-cysteinyl-[protein] + A + AMP + diphosphate + H(+). Catalyzes the 2-thiolation of uridine at the wobble position (U34) of mitochondrial tRNA(Lys), tRNA(Glu) and tRNA(Gln). Required for the formation of 5-taurinomethyl-2-thiouridine (tm5s2U) of mitochondrial tRNA(Lys), tRNA(Glu), and tRNA(Gln) at the wobble position. ATP is required to activate the C2 atom of the wobble base. In Schizosaccharomyces pombe (strain 972 / ATCC 24843) (Fission yeast), this protein is Mitochondrial tRNA-specific 2-thiouridylase 1.